The sequence spans 295 residues: Tyrosine recombinase XerC (295 aa).

A Core-binding (CB) domain is found at 1 to 84 (MTLEEQFLSY…SLKSFYRFLT (84 aa)). Residues 105–289 (KLPEFFYQDE…SMQHLTVEYR (185 aa)) form the Tyr recombinase domain. Residues Arg-145, Lys-169, His-241, Arg-244, and His-267 contribute to the active site. The O-(3'-phospho-DNA)-tyrosine intermediate role is filled by Tyr-276.

Belongs to the 'phage' integrase family. XerC subfamily. As to quaternary structure, forms a cyclic heterotetrameric complex composed of two molecules of XerC and two molecules of XerD.

It is found in the cytoplasm. Functionally, site-specific tyrosine recombinase, which acts by catalyzing the cutting and rejoining of the recombining DNA molecules. The XerC-XerD complex is essential to convert dimers of the bacterial chromosome into monomers to permit their segregation at cell division. It also contributes to the segregational stability of plasmids. In Lactobacillus delbrueckii subsp. bulgaricus (strain ATCC 11842 / DSM 20081 / BCRC 10696 / JCM 1002 / NBRC 13953 / NCIMB 11778 / NCTC 12712 / WDCM 00102 / Lb 14), this protein is Tyrosine recombinase XerC.